The following is a 525-amino-acid chain: GMP synthase [glutamine-hydrolyzing] (525 aa).

In terms of domain architecture, Glutamine amidotransferase type-1 spans 9–207 (RILILDFGSQ…ILDICGCEAL (199 aa)). C86 serves as the catalytic Nucleophile. Active-site residues include H181 and E183. One can recognise a GMPS ATP-PPase domain in the interval 208-400 (WTPSKIAEDA…LGLPYDMVYR (193 aa)). ATP is bound at residue 235-241 (SGGVDSS).

Homodimer.

It carries out the reaction XMP + L-glutamine + ATP + H2O = GMP + L-glutamate + AMP + diphosphate + 2 H(+). Its pathway is purine metabolism; GMP biosynthesis; GMP from XMP (L-Gln route): step 1/1. Its function is as follows. Catalyzes the synthesis of GMP from XMP. The sequence is that of GMP synthase [glutamine-hydrolyzing] from Pseudomonas syringae pv. syringae (strain B728a).